Consider the following 206-residue polypeptide: Transcriptional regulator GfcR (206 aa).

The protein belongs to the purine/pyrimidine phosphoribosyltransferase family. GfcR subfamily.

The polypeptide is Transcriptional regulator GfcR (Methanosphaerula palustris (strain ATCC BAA-1556 / DSM 19958 / E1-9c)).